A 1299-amino-acid polypeptide reads, in one-letter code: Phosphoribosylformylglycinamidine synthase (1299 aa).

Residues 310-321 (GAATGAGGEIRD), 389-391 (TGY), and Ala-680 each bind ATP. The Mg(2+) site is built by Asp-681, Glu-720, Asn-724, and Asp-888. Ser-890 contributes to the ATP binding site. In terms of domain architecture, Glutamine amidotransferase type-1 spans 1046–1299 (VAVLREQGVN…MFRNARVWLG (254 aa)). Cys-1139 acts as the Nucleophile in catalysis. Catalysis depends on residues His-1264 and Glu-1266.

In the N-terminal section; belongs to the FGAMS family. In terms of assembly, monomer.

It is found in the cytoplasm. It carries out the reaction N(2)-formyl-N(1)-(5-phospho-beta-D-ribosyl)glycinamide + L-glutamine + ATP + H2O = 2-formamido-N(1)-(5-O-phospho-beta-D-ribosyl)acetamidine + L-glutamate + ADP + phosphate + H(+). It participates in purine metabolism; IMP biosynthesis via de novo pathway; 5-amino-1-(5-phospho-D-ribosyl)imidazole from N(2)-formyl-N(1)-(5-phospho-D-ribosyl)glycinamide: step 1/2. In terms of biological role, phosphoribosylformylglycinamidine synthase involved in the purines biosynthetic pathway. Catalyzes the ATP-dependent conversion of formylglycinamide ribonucleotide (FGAR) and glutamine to yield formylglycinamidine ribonucleotide (FGAM) and glutamate. In Myxococcus xanthus (strain DK1622), this protein is Phosphoribosylformylglycinamidine synthase.